We begin with the raw amino-acid sequence, 370 residues long: Zinc finger protein 830 (370 aa).

2 disordered regions span residues 1 to 21 and 75 to 220; these read MASS…QEEL and HRER…LVPH. Residue A2 is modified to N-acetylalanine. Positions 16–40 form a coiled coil; sequence VNQEELRRLMKEKQRLSTNRKRIES. Residues 53-75 form a C2H2-type zinc finger; that stretch reads CALCNTPVKSELLWQTHVLGKQH. Polar residues predominate over residues 90–99; that stretch reads QGPSAGTAPQ. The segment covering 104 to 115 has biased composition (basic and acidic residues); the sequence is KTTDVESQDAKK. The span at 121 to 134 shows a compositional bias: polar residues; sequence DQVQPSTSASSANF. Acidic residues predominate over residues 156-171; that stretch reads DYEEEEEEEEEEELGG. Positions 172–191 are enriched in basic and acidic residues; that stretch reads GEERRDSSKHLPDAQGREHS. The span at 196 to 212 shows a compositional bias: polar residues; sequence RETTSNVLPNDPFNTNP. A Phosphoserine modification is found at S223. Positions 310 to 338 form a coiled coil; sequence IECYRRVEKLRNRQDEIKNKLKEVLTIKE. S349 and S360 each carry phosphoserine.

In terms of assembly, component of the XAB2 complex, a multimeric protein complex composed of XAB2, PRPF19, AQR, ZNF830, ISY1, and PPIE; this complex binds preferentially to RNA. Interacts with XAB2. Identified in a pentameric intron-binding (IB) complex composed of AQR, XAB2, ISY1, ZNF830 and PPIE that is incorporated into the spliceosome as a preassembled complex. The IB complex does not contain PRPF19. In terms of processing, phosphorylated in response to DNA damage by the cell cycle checkpoint kinases ATR/ATM.

Its subcellular location is the nucleus. It localises to the chromosome. The protein resides in the nucleus speckle. Its function is as follows. May play a role in pre-mRNA splicing as component of the spliceosome. Acts as an important regulator of the cell cycle that participates in the maintenance of genome integrity. During cell cycle progression in embryonic fibroblast, prevents replication fork collapse, double-strand break formation and cell cycle checkpoint activation. Controls mitotic cell cycle progression and cell survival in rapidly proliferating intestinal epithelium and embryonic stem cells. During the embryo preimplantation, controls different aspects of M phase. During early oocyte growth, plays a role in oocyte survival by preventing chromosomal breaks formation, activation of TP63 and reduction of transcription. The protein is Zinc finger protein 830 of Rattus norvegicus (Rat).